The primary structure comprises 313 residues: Porphobilinogen deaminase (313 aa).

S-(dipyrrolylmethanemethyl)cysteine is present on Cys-242.

It belongs to the HMBS family. Monomer. It depends on dipyrromethane as a cofactor.

The enzyme catalyses 4 porphobilinogen + H2O = hydroxymethylbilane + 4 NH4(+). It participates in porphyrin-containing compound metabolism; protoporphyrin-IX biosynthesis; coproporphyrinogen-III from 5-aminolevulinate: step 2/4. Its function is as follows. Tetrapolymerization of the monopyrrole PBG into the hydroxymethylbilane pre-uroporphyrinogen in several discrete steps. The protein is Porphobilinogen deaminase of Escherichia coli O7:K1 (strain IAI39 / ExPEC).